The sequence spans 226 residues: Thiamine-phosphate synthase (226 aa).

4-amino-2-methyl-5-(diphosphooxymethyl)pyrimidine is bound by residues Gln-46–Lys-50 and Asn-87. Mg(2+) is bound by residues Asp-88 and Asp-107. Ser-126 is a binding site for 4-amino-2-methyl-5-(diphosphooxymethyl)pyrimidine. Residue Thr-152–Thr-154 coordinates 2-[(2R,5Z)-2-carboxy-4-methylthiazol-5(2H)-ylidene]ethyl phosphate. Position 155 (Lys-155) interacts with 4-amino-2-methyl-5-(diphosphooxymethyl)pyrimidine. Gly-183 serves as a coordination point for 2-[(2R,5Z)-2-carboxy-4-methylthiazol-5(2H)-ylidene]ethyl phosphate.

It belongs to the thiamine-phosphate synthase family. Mg(2+) serves as cofactor.

The catalysed reaction is 2-[(2R,5Z)-2-carboxy-4-methylthiazol-5(2H)-ylidene]ethyl phosphate + 4-amino-2-methyl-5-(diphosphooxymethyl)pyrimidine + 2 H(+) = thiamine phosphate + CO2 + diphosphate. It catalyses the reaction 2-(2-carboxy-4-methylthiazol-5-yl)ethyl phosphate + 4-amino-2-methyl-5-(diphosphooxymethyl)pyrimidine + 2 H(+) = thiamine phosphate + CO2 + diphosphate. It carries out the reaction 4-methyl-5-(2-phosphooxyethyl)-thiazole + 4-amino-2-methyl-5-(diphosphooxymethyl)pyrimidine + H(+) = thiamine phosphate + diphosphate. It functions in the pathway cofactor biosynthesis; thiamine diphosphate biosynthesis; thiamine phosphate from 4-amino-2-methyl-5-diphosphomethylpyrimidine and 4-methyl-5-(2-phosphoethyl)-thiazole: step 1/1. In terms of biological role, condenses 4-methyl-5-(beta-hydroxyethyl)thiazole monophosphate (THZ-P) and 2-methyl-4-amino-5-hydroxymethyl pyrimidine pyrophosphate (HMP-PP) to form thiamine monophosphate (TMP). The sequence is that of Thiamine-phosphate synthase from Mycobacterium sp. (strain KMS).